The primary structure comprises 482 residues: tRNA sulfurtransferase (482 aa).

The THUMP domain maps to 61 to 165 (PAIRDALTRI…NDRLLLVKGR (105 aa)). Residues 183–184 (LI), lysine 265, glycine 287, and glutamine 296 each bind ATP. A disulfide bridge connects residues cysteine 344 and cysteine 456. The Rhodanese domain occupies 404 to 482 (FGANDAILDI…GFSNVKVYRP (79 aa)). The active-site Cysteine persulfide intermediate is the cysteine 456.

This sequence belongs to the ThiI family.

It localises to the cytoplasm. It catalyses the reaction [ThiI sulfur-carrier protein]-S-sulfanyl-L-cysteine + a uridine in tRNA + 2 reduced [2Fe-2S]-[ferredoxin] + ATP + H(+) = [ThiI sulfur-carrier protein]-L-cysteine + a 4-thiouridine in tRNA + 2 oxidized [2Fe-2S]-[ferredoxin] + AMP + diphosphate. The enzyme catalyses [ThiS sulfur-carrier protein]-C-terminal Gly-Gly-AMP + S-sulfanyl-L-cysteinyl-[cysteine desulfurase] + AH2 = [ThiS sulfur-carrier protein]-C-terminal-Gly-aminoethanethioate + L-cysteinyl-[cysteine desulfurase] + A + AMP + 2 H(+). The protein operates within cofactor biosynthesis; thiamine diphosphate biosynthesis. Catalyzes the ATP-dependent transfer of a sulfur to tRNA to produce 4-thiouridine in position 8 of tRNAs, which functions as a near-UV photosensor. Also catalyzes the transfer of sulfur to the sulfur carrier protein ThiS, forming ThiS-thiocarboxylate. This is a step in the synthesis of thiazole, in the thiamine biosynthesis pathway. The sulfur is donated as persulfide by IscS. The sequence is that of tRNA sulfurtransferase from Klebsiella pneumoniae subsp. pneumoniae (strain ATCC 700721 / MGH 78578).